The primary structure comprises 185 residues: Ribosome-recycling factor (185 aa).

It belongs to the RRF family.

The protein localises to the cytoplasm. In terms of biological role, responsible for the release of ribosomes from messenger RNA at the termination of protein biosynthesis. May increase the efficiency of translation by recycling ribosomes from one round of translation to another. The sequence is that of Ribosome-recycling factor from Kocuria rhizophila (strain ATCC 9341 / DSM 348 / NBRC 103217 / DC2201).